We begin with the raw amino-acid sequence, 938 residues long: Auxilin (938 aa).

Residues 19 to 41 (AAAGENRMKDSENKGASSPDMEP) are disordered. Tandem repeats lie at residues 61-64 (NLKD), 65-68 (NLKD), and 69-72 (TLKD). Residues 61–72 (NLKDNLKDTLKD) form a 3 X 4 AA approximate tandem repeats region. The 168-residue stretch at 80–247 (SVSSYTKGDL…GYMCDLLADK (168 aa)) folds into the Phosphatase tensin-type domain. At serine 137 the chain carries Phosphoserine. Cysteine 189 (phosphocysteine intermediate) is an active-site residue. The 139-residue stretch at 253 to 391 (FKPLTIKAIT…FQVTLDIEVQ (139 aa)) folds into the C2 tensin-type domain. The SH3-binding signature appears at 434–442 (PADLPPDHP). Residues 467 to 801 (EEDHAALVNQ…GKGSTNLEGK (335 aa)) are disordered. 2 positions are modified to phosphoserine: serine 478 and serine 481. Positions 531–548 (DVSTNFSSLAAPPSNSEL) are enriched in polar residues. Low complexity predominate over residues 559–569 (TGPAQAGQAGV). Composition is skewed to polar residues over residues 579-596 (VSAQ…SASP) and 624-654 (FLNT…TPAV). Serine 595 bears the Phosphoserine mark. A compositionally biased stretch (low complexity) spans 679–694 (SAATSPTGSSHGTPTH). The span at 754-781 (NWQQTQSKPQSSMPHSSPQNRPNYNVSF) shows a compositional bias: polar residues. In terms of domain architecture, J spans 874–938 (TKWKPVGMAD…FENQGQKPLY (65 aa)).

In terms of assembly, forms a complex composed of HSPA8, CLTC and DNAJC6. Interacts with HSPA8/HSC70 in an ATP-dependent manner; this interaction stimulates the HSPA8's ATPase activity. Interacts with CLTC; this interaction produces a local change in heavy-chain contacts, creating a detectable global distortion of the clathrin coat. Interacts with AP2A2. Interacts with DNM1(GTP-bound form); this interaction allows clathrin-coated vesicle (CCV) formation at the plasma membrane. Post-translationally, the N-terminus is blocked. Phosphorylation at Ser-595 modulates its ability to bind CLTC and therefore the synaptic vesicle endocytosis (SVE).

It localises to the cytoplasmic vesicle. Its subcellular location is the clathrin-coated vesicle. May act as a protein phosphatase and/or a lipid phosphatase. Co-chaperone that recruits HSPA8/HSC70 to clathrin-coated vesicles (CCVs) and promotes the ATP-dependent dissociation of clathrin from CCVs and participates in clathrin-mediated endocytosis of synaptic vesicles and their recycling and also in intracellular trafficking. Firstly, binds tightly to the clathrin cages, at a ratio of one DNAJC6 per clathrin triskelion. The HSPA8:ATP complex then binds to the clathrin-auxilin cage, initially at a ratio of one HSPA8 per triskelion leading to ATP hydrolysis stimulation and causing a conformational change in the HSPA8. This cycle is repeated three times to drive to a complex containing the clathrin-auxilin cage associated to three HSPA8:ADP complex. The ATP hydrolysis of the third HSPA8:ATP complex leads to a concerted dismantling of the cage into component triskelia. Then, dissociates from the released triskelia and be recycled to initiate another cycle of HSPA8's recruitment. Also acts during the early steps of clathrin-coated vesicle (CCV) formation through its interaction with the GTP bound form of DNM1. The sequence is that of Auxilin from Mus musculus (Mouse).